A 445-amino-acid polypeptide reads, in one-letter code: N-succinylarginine dihydrolase (445 aa).

Substrate is bound by residues 19-28, Asn-110, and 137-138; these read AGLSFGNVAS and HR. Residue Glu-174 is part of the active site. A substrate-binding site is contributed by Arg-214. His-250 is an active-site residue. 2 residues coordinate substrate: Asp-252 and Asn-363. Cys-369 functions as the Nucleophile in the catalytic mechanism.

This sequence belongs to the succinylarginine dihydrolase family. As to quaternary structure, homodimer.

The enzyme catalyses N(2)-succinyl-L-arginine + 2 H2O + 2 H(+) = N(2)-succinyl-L-ornithine + 2 NH4(+) + CO2. The protein operates within amino-acid degradation; L-arginine degradation via AST pathway; L-glutamate and succinate from L-arginine: step 2/5. In terms of biological role, catalyzes the hydrolysis of N(2)-succinylarginine into N(2)-succinylornithine, ammonia and CO(2). This chain is N-succinylarginine dihydrolase, found in Shewanella piezotolerans (strain WP3 / JCM 13877).